We begin with the raw amino-acid sequence, 376 residues long: N-acetyldiaminopimelate deacetylase (376 aa).

Asp-69 is an active-site residue. The active-site Proton acceptor is the Glu-128.

This sequence belongs to the peptidase M20A family. N-acetyldiaminopimelate deacetylase subfamily.

It carries out the reaction N-acetyl-(2S,6S)-2,6-diaminopimelate + H2O = (2S,6S)-2,6-diaminopimelate + acetate. It participates in amino-acid biosynthesis; L-lysine biosynthesis via DAP pathway; LL-2,6-diaminopimelate from (S)-tetrahydrodipicolinate (acetylase route): step 3/3. Its function is as follows. Catalyzes the conversion of N-acetyl-diaminopimelate to diaminopimelate and acetate. The protein is N-acetyldiaminopimelate deacetylase of Streptococcus pneumoniae (strain CGSP14).